A 110-amino-acid chain; its full sequence is Large ribosomal subunit protein uL24 (110 aa).

Belongs to the universal ribosomal protein uL24 family. In terms of assembly, part of the 50S ribosomal subunit.

Its function is as follows. One of two assembly initiator proteins, it binds directly to the 5'-end of the 23S rRNA, where it nucleates assembly of the 50S subunit. One of the proteins that surrounds the polypeptide exit tunnel on the outside of the subunit. This chain is Large ribosomal subunit protein uL24, found in Ureaplasma parvum serovar 3 (strain ATCC 27815 / 27 / NCTC 11736).